The following is a 599-amino-acid chain: Elongation factor 4 (599 aa).

The tr-type G domain maps to 4–186 (DNIRNFSIIA…EIVNKIPPPR (183 aa)). Residues 16–21 (DHGKST) and 133–136 (NKID) contribute to the GTP site.

Belongs to the TRAFAC class translation factor GTPase superfamily. Classic translation factor GTPase family. LepA subfamily.

Its subcellular location is the cell inner membrane. The catalysed reaction is GTP + H2O = GDP + phosphate + H(+). Required for accurate and efficient protein synthesis under certain stress conditions. May act as a fidelity factor of the translation reaction, by catalyzing a one-codon backward translocation of tRNAs on improperly translocated ribosomes. Back-translocation proceeds from a post-translocation (POST) complex to a pre-translocation (PRE) complex, thus giving elongation factor G a second chance to translocate the tRNAs correctly. Binds to ribosomes in a GTP-dependent manner. In Geotalea daltonii (strain DSM 22248 / JCM 15807 / FRC-32) (Geobacter daltonii), this protein is Elongation factor 4.